Here is a 348-residue protein sequence, read N- to C-terminus: D-alanine--D-alanine ligase (348 aa).

Positions K132 to R334 constitute an ATP-grasp domain. An ATP-binding site is contributed by E162–E217. Mg(2+) is bound by residues D288, E301, and N303.

This sequence belongs to the D-alanine--D-alanine ligase family. The cofactor is Mg(2+). It depends on Mn(2+) as a cofactor.

It is found in the cytoplasm. The enzyme catalyses 2 D-alanine + ATP = D-alanyl-D-alanine + ADP + phosphate + H(+). Its pathway is cell wall biogenesis; peptidoglycan biosynthesis. Functionally, cell wall formation. The sequence is that of D-alanine--D-alanine ligase from Streptococcus equi subsp. zooepidemicus (strain H70).